The chain runs to 358 residues: Peptide chain release factor 1 (358 aa).

Position 235 is an N5-methylglutamine (Q235).

This sequence belongs to the prokaryotic/mitochondrial release factor family. Post-translationally, methylated by PrmC. Methylation increases the termination efficiency of RF1.

The protein resides in the cytoplasm. Its function is as follows. Peptide chain release factor 1 directs the termination of translation in response to the peptide chain termination codons UAG and UAA. This Neisseria meningitidis serogroup B (strain ATCC BAA-335 / MC58) protein is Peptide chain release factor 1.